The primary structure comprises 1677 residues: Zinc finger protein 831 (1677 aa).

The span at M1–A26 shows a compositional bias: pro residues. The interval M1–P43 is disordered. C2H2-type zinc fingers lie at residues Y144 to H166 and F172 to H196. 10 disordered regions span residues T193–A250, G270–E398, W516–H557, E663–A931, T950–A1062, N1100–L1119, L1137–S1176, L1216–Q1243, S1510–G1597, and L1620–I1677. Composition is skewed to basic and acidic residues over residues E216–S232 and K325–S341. Residues E376–V385 show a composition bias toward gly residues. Residues G391–Q423 are a coiled coil. Basic and acidic residues-rich tracts occupy residues L517–W526, Q674–I684, P707–E727, and S813–K834. Composition is skewed to low complexity over residues L880–L894 and P905–L919. Low complexity predominate over residues S1153 to T1170. Residues Q1518–S1531 are compositionally biased toward polar residues. Residues R1649–F1662 are compositionally biased toward basic and acidic residues.

The protein is Zinc finger protein 831 (ZNF831) of Homo sapiens (Human).